A 660-amino-acid polypeptide reads, in one-letter code: Transcription activator of gluconeogenesis CHGG_09150 (660 aa).

Residues 1–12 (MSDSENEYDETD) are compositionally biased toward acidic residues. Positions 1-52 (MSDSENEYDETDQLVKEEDEKMSDQRLTSEGADTSAEPKKKYDPKDPLRPRR) are disordered. Composition is skewed to basic and acidic residues over residues 13 to 24 (QLVKEEDEKMSD) and 36 to 49 (AEPKKKYDPKDPLR). The zn(2)-C6 fungal-type DNA-binding region spans 59-87 (CFACQRAHLTCGDERPCQRCIKRNLMESC). 3 disordered regions span residues 98–144 (LHDA…TFFS), 170–191 (FANQQSPTSPSFQTSGNPQISG), and 319–368 (PTSI…RQSN). Polar residues predominate over residues 129 to 144 (SIQTSEASSNQGTFFS). Low complexity predominate over residues 173–184 (QQSPTSPSFQTS). 2 stretches are compositionally biased toward polar residues: residues 320 to 332 (TSIQSPSTDTNSP) and 344 to 368 (TMATFSTTPGSKPANQQRPSTRQSN). The region spanning 455–526 (SLLEYEEFMH…NSKARVGLAT (72 aa)) is the PAS domain. Positions 587-613 (APDKDDGTGESSTDGQLPQKDPRNSIL) are disordered.

Belongs to the ERT1/acuK family.

Its subcellular location is the nucleus. Transcription factor which regulates nonfermentable carbon utilization. Activator of gluconeogenetic genes. In Chaetomium globosum (strain ATCC 6205 / CBS 148.51 / DSM 1962 / NBRC 6347 / NRRL 1970) (Soil fungus), this protein is Transcription activator of gluconeogenesis CHGG_09150.